The primary structure comprises 743 residues: Phosphoribosylformylglycinamidine synthase subunit PurL (743 aa).

His-50 is an active-site residue. Residues Tyr-53 and Lys-92 each coordinate ATP. Glu-94 is a Mg(2+) binding site. Substrate-binding positions include 95-98 and Arg-117; that span reads SHNH. His-96 functions as the Proton acceptor in the catalytic mechanism. Asp-118 contributes to the Mg(2+) binding site. Gln-241 contributes to the substrate binding site. Residue Asp-269 coordinates Mg(2+). 313–315 contacts substrate; sequence ESQ. ATP is bound by residues Asp-495 and Gly-532. Asn-533 is a binding site for Mg(2+). Ser-535 provides a ligand contact to substrate.

It belongs to the FGAMS family. Monomer. Part of the FGAM synthase complex composed of 1 PurL, 1 PurQ and 2 PurS subunits.

It localises to the cytoplasm. It catalyses the reaction N(2)-formyl-N(1)-(5-phospho-beta-D-ribosyl)glycinamide + L-glutamine + ATP + H2O = 2-formamido-N(1)-(5-O-phospho-beta-D-ribosyl)acetamidine + L-glutamate + ADP + phosphate + H(+). It functions in the pathway purine metabolism; IMP biosynthesis via de novo pathway; 5-amino-1-(5-phospho-D-ribosyl)imidazole from N(2)-formyl-N(1)-(5-phospho-D-ribosyl)glycinamide: step 1/2. Its function is as follows. Part of the phosphoribosylformylglycinamidine synthase complex involved in the purines biosynthetic pathway. Catalyzes the ATP-dependent conversion of formylglycinamide ribonucleotide (FGAR) and glutamine to yield formylglycinamidine ribonucleotide (FGAM) and glutamate. The FGAM synthase complex is composed of three subunits. PurQ produces an ammonia molecule by converting glutamine to glutamate. PurL transfers the ammonia molecule to FGAR to form FGAM in an ATP-dependent manner. PurS interacts with PurQ and PurL and is thought to assist in the transfer of the ammonia molecule from PurQ to PurL. In Rhizobium etli (strain ATCC 51251 / DSM 11541 / JCM 21823 / NBRC 15573 / CFN 42), this protein is Phosphoribosylformylglycinamidine synthase subunit PurL.